The sequence spans 159 residues: uncharacterized protein (159 aa).

2 disordered regions span residues 1–29 and 114–159; these read MHQT…TSES and TRGG…NENT. Polar residues predominate over residues 15–29; that stretch reads SFSNESPTSRETSES.

This is an uncharacterized protein from Homo sapiens (Human).